The following is an 88-amino-acid chain: Small ribosomal subunit protein uS15 (88 aa).

It belongs to the universal ribosomal protein uS15 family. In terms of assembly, part of the 30S ribosomal subunit. Forms a bridge to the 50S subunit in the 70S ribosome, contacting the 23S rRNA.

In terms of biological role, one of the primary rRNA binding proteins, it binds directly to 16S rRNA where it helps nucleate assembly of the platform of the 30S subunit by binding and bridging several RNA helices of the 16S rRNA. Its function is as follows. Forms an intersubunit bridge (bridge B4) with the 23S rRNA of the 50S subunit in the ribosome. In Borreliella afzelii (strain PKo) (Borrelia afzelii), this protein is Small ribosomal subunit protein uS15.